A 187-amino-acid chain; its full sequence is MESLQNHFLIAMPSLDDTFFERTVIYLCEHDEKGAMGLVINKPLGIEVNSLLEQMDLPTEQVSADLAMGSQVLMGGPVSQDRGFVLHTSQPYWANSTELGSGLMLTTSRDVLTAIGSKRSPDKFLVALGYAGWSKNQLEQELADNSWLTIPADHALLFDINHEDRWQQASRSLGFEAWQLSTQAGHA.

Belongs to the UPF0301 (AlgH) family.

In Shewanella oneidensis (strain ATCC 700550 / JCM 31522 / CIP 106686 / LMG 19005 / NCIMB 14063 / MR-1), this protein is UPF0301 protein SO_3346.